The primary structure comprises 252 residues: Membrane protein insertase YidC (252 aa).

The signal sequence occupies residues 1 to 20 (MRKKFGIIVALIALTTLLSG). The N-palmitoyl cysteine moiety is linked to residue Cys-21. Cys-21 carries the S-diacylglycerol cysteine lipid modification. 5 helical membrane passes run 59 to 79 (YGLA…PLNV), 129 to 149 (LAGC…YHAI), 160 to 180 (FLWF…GLFT), 206 to 226 (IMLY…PAAL), and 228 to 248 (LYWV…NKPM).

The protein belongs to the OXA1/ALB3/YidC family. Type 2 subfamily.

Its subcellular location is the cell membrane. Required for the insertion and/or proper folding and/or complex formation of integral membrane proteins into the membrane. Involved in integration of membrane proteins that insert both dependently and independently of the Sec translocase complex, as well as at least some lipoproteins. The polypeptide is Membrane protein insertase YidC (Oceanobacillus iheyensis (strain DSM 14371 / CIP 107618 / JCM 11309 / KCTC 3954 / HTE831)).